The chain runs to 126 residues: Histone H2B.5 (126 aa).

Residues 1–27 are compositionally biased toward basic and acidic residues; it reads MAPKAEKKPSEKAPKADKKITKEGGSE. The interval 1–34 is disordered; the sequence is MAPKAEKKPSEKAPKADKKITKEGGSERKKKTKK. A2 carries the post-translational modification N,N,N-trimethylalanine; alternate. A2 is modified (n,N-dimethylalanine; alternate). Residue A2 is modified to N-methylalanine; alternate. An N6-methyllysine modification is found at K4. N6-acetyllysine is present on residues K7, K12, K18, and K19. Residue K122 forms a Glycyl lysine isopeptide (Lys-Gly) (interchain with G-Cter in ubiquitin) linkage.

It belongs to the histone H2B family. In terms of assembly, the nucleosome is a histone octamer containing two molecules each of H2A, H2B, H3 and H4 assembled in one H3-H4 heterotetramer and two H2A-H2B heterodimers. The octamer wraps approximately 147 bp of DNA. Can be acetylated to form H2BK6ac, H2BK33ac and H2BK34ac. In terms of processing, monoubiquitinated by BRE1 to form H2BK143ub1 and deubiquitinated by UBP26. Required for heterochromatic histone H3 di- and trimethylation at H3K4me. May give a specific tag for epigenetic transcriptional activation.

Its subcellular location is the nucleus. It localises to the chromosome. Its function is as follows. Core component of nucleosome. Nucleosomes wrap and compact DNA into chromatin, limiting DNA accessibility to the cellular machineries which require DNA as a template. Histones thereby play a central role in transcription regulation, DNA repair, DNA replication and chromosomal stability. DNA accessibility is regulated via a complex set of post-translational modifications of histones, also called histone code, and nucleosome remodeling. This is Histone H2B.5 from Arabidopsis thaliana (Mouse-ear cress).